A 403-amino-acid polypeptide reads, in one-letter code: Phosphoserine phosphatase RsbP (403 aa).

Positions 1–42 (MDKQLNDAPCGFLALSEEGSIIAANRTLIKILDYEPEQVIGQ) constitute a PAS domain. One can recognise a PPM-type phosphatase domain in the interval 191–402 (QVQIDSYYNA…DDECFILVDV (212 aa)).

The cofactor is Mn(2+).

The enzyme catalyses O-phospho-L-serine + H2O = L-serine + phosphate. The catalysed reaction is O-phospho-D-serine + H2O = D-serine + phosphate. In terms of biological role, positive regulator of sigma-B activity. Dephosphorylates RsbV in response to energy stress. In Bacillus subtilis (strain 168), this protein is Phosphoserine phosphatase RsbP (rsbP).